The sequence spans 1132 residues: Telomerase reverse transcriptase (1132 aa).

The interval 1 to 230 (MPRAPRCRAV…ARRRGGSASR (230 aa)) is RNA-interacting domain 1. The segment at 58 to 197 (VPWDARPPPA…PHASGPRRRL (140 aa)) is GQ motif. Residues 137-141 (WGLLL) form a required for regulating specificity for telomeric DNA and for processivity for primer elongation region. Positions 210–320 (AGVPLGLPAP…SRPPRPWDTP (111 aa)) are disordered. Residues 213–234 (PLGLPAPGARRRGGSASRSLPL) show a composition bias toward low complexity. A Bipartite nuclear localization signal motif is present at residues 222 to 240 (RRRGGSASRSLPLPKRPRR). Ser227 is subject to Phosphoserine; by PKB/AKT1. The tract at residues 231–324 (SLPLPKRPRR…RPWDTPCPPV (94 aa)) is linker. Over residues 293–304 (RHSHPSVGRQHH) the composition is skewed to basic residues. A required for oligomerization region spans residues 301–538 (RQHHAGPPST…VPAAEHRLRE (238 aa)). Pro residues predominate over residues 310–320 (TSRPPRPWDTP). Residues 325-550 (YAETKHFLYS…LAKFLHWLMS (226 aa)) are RNA-interacting domain 2. The TFLY; involved in RNA binding motif lies at 328–333 (TKHFLY). The QFP motif stretch occupies residues 376-521 (PRRLPRLPQR…MSVRDCAWLR (146 aa)). The tract at residues 397-417 (LGNHAQCPYGVLLKTHCPLRA) is CP motif. Position 457 is a phosphoserine; by DYRK2 (Ser457). Residues 605–935 (EVRQHREARP…GLFPWCGLLL (331 aa)) form the Reverse transcriptase domain. Tyr707 is subject to Phosphotyrosine; by SRC-type Tyr-kinases. The Mg(2+) site is built by Asp712, Asp868, and Asp869. The interval 914 to 928 (LGGTAFVQMPAHGLF) is required for oligomerization. Positions 930–934 (WCGLL) are primer grip sequence. The segment at 936–1132 (DTRTLEVQSD…LPSDFKTILD (197 aa)) is CTE.

It belongs to the reverse transcriptase family. Telomerase subfamily. In terms of assembly, catalytic component of the telomerase holoenzyme complex composed of one molecule of TERT, one molecule of WRAP53/TCAB1, two molecules of H/ACA ribonucleoprotein complex subunits DKC1, NOP10, NHP2 and GAR1, and a telomerase RNA template component (TERC). The telomerase holoenzyme complex is associated with TEP1, SMG6/EST1A and POT1. The molecular chaperone HSP90/P23 complex is required for correct assembly and stabilization of the active telomerase. Interacts directly with HSP90A and PTGES3. Interacts with HSPA1A; the interaction occurs in the absence of TERC and dissociates once the complex has formed. Interacts with RAN; the interaction promotes nuclear export of TERT. Interacts with XPO1. Interacts with PTPN11; the interaction retains TERT in the nucleus. Interacts with NCL (via RRM1 and C-terminal RRM4/Arg/Gly-rich domains); the interaction is important for nucleolar localization of TERT. Interacts with SMARCA4 (via the bromodomain); the interaction regulates Wnt-mediated signaling. Interacts with MCRS1 (isoform MCRS2); the interaction inhibits in vitro telomerase activity. Interacts with PIF1; the interaction has no effect on the elongation activity of TERT. Interacts with PML; the interaction recruits TERT to PML bodies and inhibits telomerase activity. Interacts with GNL3L. Interacts with isoform 1 and isoform 2 of NVL. Interacts with DHX36. Interacts with ATF7. Phosphorylation at Tyr-707 under oxidative stress leads to translocation of TERT to the cytoplasm and reduces its antiapoptotic activity. Dephosphorylated by SHP2/PTPN11 leading to nuclear retention. Phosphorylation at Ser-227 by the AKT pathway promotes nuclear location. Phosphorylation at the G2/M phase at Ser-457 by DYRK2 promotes ubiquitination by the EDVP complex and degradation. In terms of processing, ubiquitinated by the EDVP complex, a E3 ligase complex following phosphorylation at Ser-457 by DYRK2. Ubiquitinated leads to proteasomal degradation. Post-translationally, (Microbial infection) In case of infection by HIV-1, the EDVP complex is hijacked by HIV-1 via interaction between HIV-1 Vpr and DCAF1/VPRBP, leading to ubiquitination and degradation. In terms of tissue distribution, expressed at a high level in thymocyte subpopulations, at an intermediate level in tonsil T-lymphocytes, and at a low to undetectable level in peripheral blood T-lymphocytes.

The protein localises to the nucleus. The protein resides in the nucleolus. It is found in the nucleoplasm. Its subcellular location is the chromosome. It localises to the telomere. The protein localises to the cytoplasm. The protein resides in the PML body. It carries out the reaction DNA(n) + a 2'-deoxyribonucleoside 5'-triphosphate = DNA(n+1) + diphosphate. Its function is as follows. Telomerase is a ribonucleoprotein enzyme essential for the replication of chromosome termini in most eukaryotes. Active in progenitor and cancer cells. Inactive, or very low activity, in normal somatic cells. Catalytic component of the teleromerase holoenzyme complex whose main activity is the elongation of telomeres by acting as a reverse transcriptase that adds simple sequence repeats to chromosome ends by copying a template sequence within the RNA component of the enzyme. Catalyzes the RNA-dependent extension of 3'-chromosomal termini with the 6-nucleotide telomeric repeat unit, 5'-TTAGGG-3'. The catalytic cycle involves primer binding, primer extension and release of product once the template boundary has been reached or nascent product translocation followed by further extension. More active on substrates containing 2 or 3 telomeric repeats. Telomerase activity is regulated by a number of factors including telomerase complex-associated proteins, chaperones and polypeptide modifiers. Modulates Wnt signaling. Plays important roles in aging and antiapoptosis. The chain is Telomerase reverse transcriptase (TERT) from Homo sapiens (Human).